Consider the following 316-residue polypeptide: Ribonuclease Z (316 aa).

Histidine 61, histidine 63, aspartate 65, histidine 66, histidine 152, aspartate 220, and histidine 279 together coordinate Zn(2+). The Proton acceptor role is filled by aspartate 65.

Belongs to the RNase Z family. Homodimer. The cofactor is Zn(2+).

It carries out the reaction Endonucleolytic cleavage of RNA, removing extra 3' nucleotides from tRNA precursor, generating 3' termini of tRNAs. A 3'-hydroxy group is left at the tRNA terminus and a 5'-phosphoryl group is left at the trailer molecule.. In terms of biological role, zinc phosphodiesterase, which displays some tRNA 3'-processing endonuclease activity. Probably involved in tRNA maturation, by removing a 3'-trailer from precursor tRNA. This is Ribonuclease Z from Clostridium perfringens (strain ATCC 13124 / DSM 756 / JCM 1290 / NCIMB 6125 / NCTC 8237 / Type A).